Consider the following 201-residue polypeptide: NAD(P)H-dependent FMN reductase ntnL (201 aa).

FMN contacts are provided by residues Arg-12, 90–93 (EYNG), and Tyr-120.

In terms of assembly, homodimer.

It carries out the reaction FMNH2 + NADP(+) = FMN + NADPH + 2 H(+). The catalysed reaction is FMNH2 + NAD(+) = FMN + NADH + 2 H(+). It functions in the pathway secondary metabolite biosynthesis; terpenoid biosynthesis. Functionally, NAD(P)H-dependent FMN reductase; part of the gene cluster that mediates the biosynthesis of the meroterpenoids nectripenoids A and B, as well as cochliquninone D and isocochliquninone E. The pathway probably begins with the HR-PKS ntnH that catalyzes two chain-extension steps to form a reduced triketide, which then primes the SAT domain in the NR-PKS ntnG to initiate three more cycles of extension to give a linear hexaketide corresponding to the polyketide part of nectripenoids. The FAD-dependent monooxygenase ntnJ then performs an oxidative decarboxylation at C11 of the ntnH/ntnG product, via an electrophilic aromatic hydroxylation with concomitant ipso-decarboxylation. The membrane-bound polyprenyl transferase ntnF then introduces a farnesyl group before the FAD-dependent monooxygenase ntnK functions as the first epoxidase on terminal C12'-C13' olefin, followed by a second epoxidation on C7'-C8' catalyzed by ntnA. The terpene cyclase/mutase ntnI then initiates the sequential tricyclic ring formation through protonation of the terminal epoxide and catalyzes the regioselective and stereoselective 6/6/6-tricyclic ring formation. The cytochrome P450 monooxygenase ntnM may then hydroxylate C1'. The chain is NAD(P)H-dependent FMN reductase ntnL from Nectria sp.